A 262-amino-acid polypeptide reads, in one-letter code: Homeobox protein Nkx-6.3 (262 aa).

The homeobox DNA-binding region spans 140 to 199; the sequence is KKHTRPTFTGHQIFALEKTFEQTKYLAGPERARLAYSLGMTESQVKVWFQNRRTKWRKKS. The tract at residues 197-237 is disordered; that stretch reads KKSALEPSSSTPRAPGGASGDRAASENEDDEYNKPLDPDSD.

Expressed in the developing CNS and gastro-intestinal tract.

The protein resides in the nucleus. Putative transcription factor, which may be involved in patterning of central nervous system and pancreas. This is Homeobox protein Nkx-6.3 (Nkx6-3) from Mus musculus (Mouse).